The chain runs to 1191 residues: Pyruvate-flavodoxin oxidoreductase (1191 aa).

2 consecutive 4Fe-4S ferredoxin-type domains span residues 687–716 (QVCS…VKAV) and 744–773 (YVLA…TGAR). Positions 696, 699, 702, 706, 753, 756, 759, 763, 825, 828, 853, and 1085 each coordinate [4Fe-4S] cluster.

Belongs to the pyruvate:ferredoxin/flavodoxin oxidoreductase family. It depends on [4Fe-4S] cluster as a cofactor.

The catalysed reaction is oxidized [flavodoxin] + pyruvate + CoA + 2 H(+) = reduced [flavodoxin] + acetyl-CoA + CO2. Functionally, oxidoreductase required for the transfer of electrons from pyruvate to flavodoxin, which reduces nitrogenase. This chain is Pyruvate-flavodoxin oxidoreductase (nifJ), found in Rhodospirillum rubrum (strain ATCC 11170 / ATH 1.1.1 / DSM 467 / LMG 4362 / NCIMB 8255 / S1).